The chain runs to 143 residues: Large ribosomal subunit protein uL22c (143 aa).

Belongs to the universal ribosomal protein uL22 family. As to quaternary structure, part of the 50S ribosomal subunit.

It is found in the plastid. The protein localises to the chloroplast. Its function is as follows. This protein binds specifically to 23S rRNA. The globular domain of the protein is located near the polypeptide exit tunnel on the outside of the subunit, while an extended beta-hairpin is found that lines the wall of the exit tunnel in the center of the 70S ribosome. The polypeptide is Large ribosomal subunit protein uL22c (rpl22) (Piper cenocladum (Ant piper)).